A 275-amino-acid polypeptide reads, in one-letter code: 4-deoxy-L-threo-5-hexosulose-uronate ketol-isomerase (275 aa).

Zn(2+)-binding residues include His-193, His-195, Glu-200, and His-242.

The protein belongs to the KduI family. Zn(2+) serves as cofactor.

The catalysed reaction is 5-dehydro-4-deoxy-D-glucuronate = 3-deoxy-D-glycero-2,5-hexodiulosonate. Its pathway is glycan metabolism; pectin degradation; 2-dehydro-3-deoxy-D-gluconate from pectin: step 4/5. Functionally, catalyzes the isomerization of 5-dehydro-4-deoxy-D-glucuronate to 3-deoxy-D-glycero-2,5-hexodiulosonate. The chain is 4-deoxy-L-threo-5-hexosulose-uronate ketol-isomerase from Bacillus licheniformis (strain ATCC 14580 / DSM 13 / JCM 2505 / CCUG 7422 / NBRC 12200 / NCIMB 9375 / NCTC 10341 / NRRL NRS-1264 / Gibson 46).